The sequence spans 388 residues: Succinate--CoA ligase [ADP-forming] subunit beta (388 aa).

An ATP-grasp domain is found at 9 to 244 (KEILRKFGVA…LDEEDPAEIE (236 aa)). Residues lysine 46, 53–55 (GRG), glutamate 99, alanine 102, and glutamate 107 contribute to the ATP site. Residues asparagine 199 and aspartate 213 each coordinate Mg(2+). Substrate is bound by residues asparagine 264 and 321–323 (GIM).

This sequence belongs to the succinate/malate CoA ligase beta subunit family. As to quaternary structure, heterotetramer of two alpha and two beta subunits. Requires Mg(2+) as cofactor.

The catalysed reaction is succinate + ATP + CoA = succinyl-CoA + ADP + phosphate. It carries out the reaction GTP + succinate + CoA = succinyl-CoA + GDP + phosphate. The protein operates within carbohydrate metabolism; tricarboxylic acid cycle; succinate from succinyl-CoA (ligase route): step 1/1. Its function is as follows. Succinyl-CoA synthetase functions in the citric acid cycle (TCA), coupling the hydrolysis of succinyl-CoA to the synthesis of either ATP or GTP and thus represents the only step of substrate-level phosphorylation in the TCA. The beta subunit provides nucleotide specificity of the enzyme and binds the substrate succinate, while the binding sites for coenzyme A and phosphate are found in the alpha subunit. This is Succinate--CoA ligase [ADP-forming] subunit beta from Burkholderia lata (strain ATCC 17760 / DSM 23089 / LMG 22485 / NCIMB 9086 / R18194 / 383).